The chain runs to 129 residues: Omega-scoloptoxin(05)-Ssm1a (129 aa).

Positions 1–24 are cleaved as a signal peptide; that stretch reads MPSLCIIALFGTLTFYTLIPSIHT. The propeptide occupies 25–46; sequence LKCVRCDGPMSNYDCKTTYPAA.

This sequence belongs to the scoloptoxin-05 family. In terms of processing, contains 3 disulfide bonds. In terms of tissue distribution, expressed by the venom gland.

Its subcellular location is the secreted. Its function is as follows. Toxin that increase voltage-gated calcium channel (Cav) currents in DRG neurons by 70% and 120%, when 1 uM and 10 uM are tested, respectively. The chain is Omega-scoloptoxin(05)-Ssm1a from Scolopendra mutilans (Chinese red-headed centipede).